The primary structure comprises 637 residues: 1-deoxy-D-xylulose-5-phosphate synthase (637 aa).

Residues His-71 and 112–114 each bind thiamine diphosphate; that span reads SHA. Asp-144 serves as a coordination point for Mg(2+). Thiamine diphosphate is bound by residues 145–146, Asn-173, Tyr-284, and Glu-365; that span reads GA. A Mg(2+)-binding site is contributed by Asn-173.

This sequence belongs to the transketolase family. DXPS subfamily. Homodimer. It depends on Mg(2+) as a cofactor. Thiamine diphosphate serves as cofactor.

It catalyses the reaction D-glyceraldehyde 3-phosphate + pyruvate + H(+) = 1-deoxy-D-xylulose 5-phosphate + CO2. The protein operates within metabolic intermediate biosynthesis; 1-deoxy-D-xylulose 5-phosphate biosynthesis; 1-deoxy-D-xylulose 5-phosphate from D-glyceraldehyde 3-phosphate and pyruvate: step 1/1. Catalyzes the acyloin condensation reaction between C atoms 2 and 3 of pyruvate and glyceraldehyde 3-phosphate to yield 1-deoxy-D-xylulose-5-phosphate (DXP). In Mycolicibacterium gilvum (strain PYR-GCK) (Mycobacterium gilvum (strain PYR-GCK)), this protein is 1-deoxy-D-xylulose-5-phosphate synthase.